The sequence spans 442 residues: PCI domain-containing protein C1105.07c (442 aa).

The PCI domain occupies 224–415 (VTFRYYLGRC…STLVLKKDPS (192 aa)).

It localises to the cytoplasm. Its subcellular location is the nucleus envelope. The polypeptide is PCI domain-containing protein C1105.07c (Schizosaccharomyces pombe (strain 972 / ATCC 24843) (Fission yeast)).